The sequence spans 164 residues: 2-C-methyl-D-erythritol 2,4-cyclodiphosphate synthase (164 aa).

2 residues coordinate a divalent metal cation: Asp-9 and His-11. 4-CDP-2-C-methyl-D-erythritol 2-phosphate contacts are provided by residues 9 to 11 (DVH) and 35 to 36 (HS). Position 43 (His-43) interacts with a divalent metal cation. 4-CDP-2-C-methyl-D-erythritol 2-phosphate is bound by residues 57–59 (DIG), 62–66 (FPDTD), 133–136 (TTTE), Phe-140, and Arg-143.

This sequence belongs to the IspF family. As to quaternary structure, homotrimer. A divalent metal cation serves as cofactor.

It carries out the reaction 4-CDP-2-C-methyl-D-erythritol 2-phosphate = 2-C-methyl-D-erythritol 2,4-cyclic diphosphate + CMP. Its pathway is isoprenoid biosynthesis; isopentenyl diphosphate biosynthesis via DXP pathway; isopentenyl diphosphate from 1-deoxy-D-xylulose 5-phosphate: step 4/6. In terms of biological role, involved in the biosynthesis of isopentenyl diphosphate (IPP) and dimethylallyl diphosphate (DMAPP), two major building blocks of isoprenoid compounds. Catalyzes the conversion of 4-diphosphocytidyl-2-C-methyl-D-erythritol 2-phosphate (CDP-ME2P) to 2-C-methyl-D-erythritol 2,4-cyclodiphosphate (ME-CPP) with a corresponding release of cytidine 5-monophosphate (CMP). This chain is 2-C-methyl-D-erythritol 2,4-cyclodiphosphate synthase, found in Syntrophotalea carbinolica (strain DSM 2380 / NBRC 103641 / GraBd1) (Pelobacter carbinolicus).